A 1468-amino-acid chain; its full sequence is Potassium channel K2 (1468 aa).

6 consecutive transmembrane segments (helical) span residues M48 to Y68, F146 to S165, I185 to Y209, L221 to F240, I246 to V264, and I285 to I306. Residues Y326 to P344 constitute an intramembrane region (pore-forming). A helical transmembrane segment spans residues V351–F368. Residues T804–Q823 form a disordered region. Residues N814–Q823 show a composition bias toward basic residues. A coiled-coil region spans residues K1141 to R1185.

It localises to the membrane. May be involved in transmembrane potassium transport at the subcellular level not affecting bulk potassium transport across the plasma membrane. This chain is Potassium channel K2, found in Plasmodium berghei (strain Anka).